The following is a 417-amino-acid chain: Tumor necrosis factor receptor superfamily member 25 (417 aa).

An N-terminal signal peptide occupies residues 1–24 (MEQRPRGCAAVAAALLLVLLGARA). Residues 25 to 199 (QGGTRSPRCD…RCAAVCGWRQ (175 aa)) are Extracellular-facing. 4 TNFR-Cys repeats span residues 34–71 (DCAGDFHKKIGLFCCRGCPAGHYLKAPCTEPCGNSTCL), 72–115 (VCPQ…DTRC), 116–163 (GCKP…TDCG), and 164–192 (TCLPGFYEHGDGCVSCPTSTLGSCPERCA). Cystine bridges form between Cys-35-Cys-47, Cys-48-Cys-61, Cys-51-Cys-70, Cys-73-Cys-89, Cys-92-Cys-107, Cys-95-Cys-115, Cys-117-Cys-130, Cys-138-Cys-155, Cys-141-Cys-162, Cys-165-Cys-176, Cys-179-Cys-191, and Cys-187-Cys-195. N-linked (GlcNAc...) asparagine glycosylation is present at Asn-67. N-linked (GlcNAc...) asparagine glycosylation is present at Asn-106. A helical transmembrane segment spans residues 200 to 220 (MFWVQVLLAGLVVPLLLGATL). The Cytoplasmic portion of the chain corresponds to 221-417 (TYTYRHCWPH…DLRSRLQRGP (197 aa)). One can recognise a Death domain in the interval 332-413 (GPQLYDVMDA…GCVEDLRSRL (82 aa)). The (Microbial infection) N-beta-linked (GlcNAc) arginine glycan is linked to Arg-352.

In terms of assembly, homodimer. Interacts strongly via the death domains with TNFRSF1 and TRADD to activate at least two distinct signaling cascades, apoptosis and NF-kappa-B signaling. Interacts with BAG4. Post-translationally, (Microbial infection) Glycosylated at Arg-352 by enteropathogenic E.coli protein NleB1. Glycosylated. Abundantly expressed in thymocytes and lymphocytes. Detected in lymphocyte-rich tissues such as thymus, colon, intestine, and spleen. Also found in the prostate.

Its subcellular location is the cell membrane. It localises to the secreted. Its function is as follows. Receptor for TNFSF12/APO3L/TWEAK. Interacts directly with the adapter TRADD. Mediates activation of NF-kappa-B and induces apoptosis. May play a role in regulating lymphocyte homeostasis. This chain is Tumor necrosis factor receptor superfamily member 25 (TNFRSF25), found in Homo sapiens (Human).